Reading from the N-terminus, the 396-residue chain is General transcription factor IIH subunit 2 (396 aa).

Residues 60-236 (HLYVVVDGSR…HYKELLARHV (177 aa)) form the VWFA domain. Tyrosine 95 carries the post-translational modification Phosphotyrosine. The segment at 292-309 (CPQCRAKYCELPVECKIC) adopts a C4-type zinc-finger fold.

It belongs to the GTF2H2 family. As to quaternary structure, component of the TFIID-containing RNA polymerase II pre-initiation complex that is composed of TBP and at least GTF2A1, GTF2A2, GTF2E1, GTF2E2, GTF2F1, GTF2H2, GTF2H3, GTF2H4, GTF2H5, GTF2B, TCEA1, ERCC2 and ERCC3. Component of the 7-subunit TFIIH core complex composed of XPB/ERCC3, XPD/ERCC2, GTF2H1, GTF2H2, GTF2H3, GTF2H4 and GTF2H5, which is active in NER. The core complex associates with the 3-subunit CDK-activating kinase (CAK) module composed of CCNH/cyclin H, CDK7 and MNAT1 to form the 10-subunit holoenzyme (holo-TFIIH) active in transcription. Interacts with XPB, XPD, GTF2H1 and GTF2H3.

It localises to the nucleus. Functionally, component of the general transcription and DNA repair factor IIH (TFIIH) core complex, which is involved in general and transcription-coupled nucleotide excision repair (NER) of damaged DNA and, when complexed to CAK, in RNA transcription by RNA polymerase II. In NER, TFIIH acts by opening DNA around the lesion to allow the excision of the damaged oligonucleotide and its replacement by a new DNA fragment. In transcription, TFIIH has an essential role in transcription initiation. When the pre-initiation complex (PIC) has been established, TFIIH is required for promoter opening and promoter escape. Phosphorylation of the C-terminal tail (CTD) of the largest subunit of RNA polymerase II by the kinase module CAK controls the initiation of transcription. The N-terminus of GTF2H2 interacts with and regulates XPD whereas an intact C-terminus is required for a successful escape of RNAP II form the promoter. The chain is General transcription factor IIH subunit 2 (Gtf2h2) from Rattus norvegicus (Rat).